An 878-amino-acid polypeptide reads, in one-letter code: Leucine--tRNA ligase (878 aa).

Positions 43 to 54 (PYPSAQGLHVGH) match the 'HIGH' region motif. A 'KMSKS' region motif is present at residues 634–638 (KMSKA). K637 is a binding site for ATP.

It belongs to the class-I aminoacyl-tRNA synthetase family.

The protein resides in the cytoplasm. The enzyme catalyses tRNA(Leu) + L-leucine + ATP = L-leucyl-tRNA(Leu) + AMP + diphosphate. This Treponema pallidum subsp. pallidum (strain SS14) protein is Leucine--tRNA ligase.